Consider the following 345-residue polypeptide: Serine/arginine-rich splicing factor 6 (345 aa).

In terms of domain architecture, RRM 1 spans 1–72 (MPRVYIGRLS…ERVIVEHARG (72 aa)). Phosphoserine is present on residues serine 45, serine 81, and serine 84. The tract at residues 75–102 (RDRDGYSYGSRSGGGGYSSRRTSGRDKY) is disordered. The RRM 2 domain maps to 110–183 (FRLIVENLSS…RNIRLIEDKP (74 aa)). Lysine 165 carries the post-translational modification N6-acetyllysine. Positions 176 to 345 (IRLIEDKPRT…RSRSRSSSRD (170 aa)) are disordered. Lysine 182 participates in a covalent cross-link: Glycyl lysine isopeptide (Lys-Gly) (interchain with G-Cter in SUMO2). Positions 185–250 (TSHRRSYSGS…RKSRSKSKSK (66 aa)) are enriched in basic residues. 2 stretches are compositionally biased toward basic and acidic residues: residues 264-273 (RSKDEYEKSR) and 282-293 (SPKENGKGDIKS). Residues serine 299 and serine 301 each carry the phosphoserine modification. A Phosphoserine; by DYRK1A modification is found at serine 305. Phosphoserine occurs at positions 316 and 318. Basic residues predominate over residues 323-345 (RASRSHSRSRSKSRSRSRSSSRD).

The protein belongs to the splicing factor SR family. In terms of assembly, binds SREK1/SFRS12. Interacts with DYRK1A. Post-translationally, extensively phosphorylated on serine residues in the RS domain. Phosphorylated by DYRK1A, probably in the RS domain. Phosphorylation by DYRK1A modulates alternative splice site selection and inhibits the expression of MAPT/Tau exon 10.

The protein resides in the nucleus. It is found in the nucleus speckle. Plays a role in constitutive splicing and modulates the selection of alternative splice sites. Plays a role in the alternative splicing of MAPT/Tau exon 10. Binds to alternative exons of TNC pre-mRNA and promotes the expression of alternatively spliced TNC. Plays a role in wound healing and in the regulation of keratinocyte differentiation and proliferation via its role in alternative splicing. This chain is Serine/arginine-rich splicing factor 6 (SRSF6), found in Bos taurus (Bovine).